A 179-amino-acid chain; its full sequence is Large ribosomal subunit protein uL6 (179 aa).

The protein belongs to the universal ribosomal protein uL6 family. As to quaternary structure, part of the 50S ribosomal subunit.

This protein binds to the 23S rRNA, and is important in its secondary structure. It is located near the subunit interface in the base of the L7/L12 stalk, and near the tRNA binding site of the peptidyltransferase center. This chain is Large ribosomal subunit protein uL6, found in Persephonella marina (strain DSM 14350 / EX-H1).